We begin with the raw amino-acid sequence, 355 residues long: MEPEKQTEISEFFLQGLSEKPEHQTLLFTMFLSTYLVTIIGNALIILAIITDSHLHTPMYFFLFNLSLVDTLLSSTTVPKMLANIQAQSRAIPFVGCLTQMYAFHLFGTMDSFLLAVMAIDRFVAIVHPQRYLVLMCSPVCGLLLGASWMITNLQSLIHTCLMAQLTFCAGSEISHFFCDLMPLLKLSGSDTHTNELVIFAFGIVVGTSPFSCILLSYIRIFWTVFKIPSTRGKWKAFSTCGLHLTVVSLSYGTIFAVYLQPTSPSSSQKDKAAALMCGVFIPMLNPFIYSIRNKDMKAALGKLIGKVAVPCPRPEQLLDVYHVPGSLLAARDTEMHPIPYPGGVQSLAGNRDME.

Over 1–25 (MEPEKQTEISEFFLQGLSEKPEHQT) the chain is Extracellular. A helical membrane pass occupies residues 26–49 (LLFTMFLSTYLVTIIGNALIILAI). Over 50–57 (ITDSHLHT) the chain is Cytoplasmic. A helical membrane pass occupies residues 58–79 (PMYFFLFNLSLVDTLLSSTTVP). The Extracellular portion of the chain corresponds to 80-100 (KMLANIQAQSRAIPFVGCLTQ). Residues 101–120 (MYAFHLFGTMDSFLLAVMAI) form a helical membrane-spanning segment. The Cytoplasmic segment spans residues 121–139 (DRFVAIVHPQRYLVLMCSP). A helical membrane pass occupies residues 140 to 158 (VCGLLLGASWMITNLQSLI). Topologically, residues 159–195 (HTCLMAQLTFCAGSEISHFFCDLMPLLKLSGSDTHTN) are extracellular. Residues 196 to 219 (ELVIFAFGIVVGTSPFSCILLSYI) traverse the membrane as a helical segment. At 220 to 236 (RIFWTVFKIPSTRGKWK) the chain is on the cytoplasmic side. The chain crosses the membrane as a helical span at residues 237 to 259 (AFSTCGLHLTVVSLSYGTIFAVY). Residues 260-272 (LQPTSPSSSQKDK) lie on the Extracellular side of the membrane. The chain crosses the membrane as a helical span at residues 273–292 (AAALMCGVFIPMLNPFIYSI). The Cytoplasmic segment spans residues 293–355 (RNKDMKAALG…QSLAGNRDME (63 aa)).

Belongs to the G-protein coupled receptor 1 family.

The protein localises to the cell membrane. In terms of biological role, odorant receptor. In Homo sapiens (Human), this protein is Olfactory receptor 1I1 (OR1I1).